The sequence spans 543 residues: Probable ubiquitin-conjugating enzyme E2 26 (543 aa).

A disordered region spans residues 1 to 21; sequence MEPDVVEIPPPPLIASGSRTR. The UBC core domain occupies 271 to 431; the sequence is NWVKKVQADW…VFLLSLKTMV (161 aa). Cys357 acts as the Glycyl thioester intermediate in catalysis. The segment at 514–543 is disordered; that stretch reads LAEKPEPPMSNANTENQSKKKTRKRSRSSR. Residues 532 to 543 are compositionally biased toward basic residues; the sequence is KKKTRKRSRSSR.

It belongs to the ubiquitin-conjugating enzyme family.

It carries out the reaction S-ubiquitinyl-[E1 ubiquitin-activating enzyme]-L-cysteine + [E2 ubiquitin-conjugating enzyme]-L-cysteine = [E1 ubiquitin-activating enzyme]-L-cysteine + S-ubiquitinyl-[E2 ubiquitin-conjugating enzyme]-L-cysteine.. It functions in the pathway protein modification; protein ubiquitination. Its function is as follows. Accepts the ubiquitin from the E1 complex and catalyzes its covalent attachment to other proteins. In Arabidopsis thaliana (Mouse-ear cress), this protein is Probable ubiquitin-conjugating enzyme E2 26 (UBC26).